The sequence spans 295 residues: MSMNENHDIQLVIITGMSGAGKTVAIQSFEDLGYFCVDNLPPSLLPKFLELMKESSSKMSKVALVMDLRGREFFDRLIEALDEMAENPWITPRILFLDAKDSILVTRYKETRRSHPLAATGLPLEGIALERQLLEELKGRSQLIYDTSDMKPRDLREKIVAHFATNQGETFTVNVMSFGFKYGLPIDADLVFDVRFLPNPFYIESMRPLTGKDEEVSSYVMKWNETQKFIEKLVDLLGFMLPSYKREGKSQLVIAIGCTGGQHRSVTLAEYLADYFKKDFYTHVTHRDIEKRSRK.

16-23 (GMSGAGKT) lines the ATP pocket. 67-70 (DLRG) serves as a coordination point for GTP.

This sequence belongs to the RapZ-like family.

Displays ATPase and GTPase activities. The chain is Nucleotide-binding protein RBAM_031990 from Bacillus velezensis (strain DSM 23117 / BGSC 10A6 / LMG 26770 / FZB42) (Bacillus amyloliquefaciens subsp. plantarum).